The following is a 462-amino-acid chain: MDDFVRVGGLGAVSAALPRALRPFADIRIMLPGYRDIIEQLTHIQIVGRCPSFADLPACSLGRAATKDGLPVYVLLCSQLYDRPGNPYGDESGRDWPDNDIRFARFASAAAELAMGKLDKNWAADLIHANDWQASLVPAYLAWRGAKLPSILTIHNLAYQGLFPKDSLRRIGAPESAFHIDGLEFYDQVSFLKAGLVYASHLTTVSGTYAREITTAEFGCGLEGLLRLRSDAAELTGILNGIDESWDPRSCAQLAQQFGAGDWVGKKANADYVRKQFGLAVSRGPMFGIVARLVHQKGIDLVLSAADEIIDAGGQIVVTGSGEPALEQALIDAHRRRPDAIGVAIGFNDAQARRIFAGSDFTLMPSRFEPCGLSQMYAQRFGSLPIGHQTGGLAETITDGETGFLFSRPSHESFLGGVRRAFEAFMAQDQLDSMRRSAMGRSFSWSISADSYSALYRKLAAV.

R6 provides a ligand contact to ADP-alpha-D-glucose.

The protein belongs to the glycosyltransferase 1 family. Bacterial/plant glycogen synthase subfamily.

It carries out the reaction [(1-&gt;4)-alpha-D-glucosyl](n) + ADP-alpha-D-glucose = [(1-&gt;4)-alpha-D-glucosyl](n+1) + ADP + H(+). The protein operates within glycan biosynthesis; glycogen biosynthesis. In terms of biological role, synthesizes alpha-1,4-glucan chains using ADP-glucose. The chain is Glycogen synthase 1 from Bradyrhizobium diazoefficiens (strain JCM 10833 / BCRC 13528 / IAM 13628 / NBRC 14792 / USDA 110).